Consider the following 374-residue polypeptide: Speckle-type POZ protein A (374 aa).

The MATH domain occupies 31–161; sequence KFSYMWTINN…DDKLTLFCEV (131 aa). The tract at residues 71-191 is required for nuclear localization; it reads VNPKGLDEES…PECRLADELG (121 aa). The BTB domain maps to 173–297; the sequence is QNTMNMVKVP…MCEEALCSNL (125 aa). Residues 297-355 are homodimerization; it reads LSVENAAEILILADLHSADQLKTQAVDFINYHASDVMETSGWKSMVVSHPHLVAEAYRS.

The protein belongs to the Tdpoz family. Homodimer. Part of cullin-RING-based BCR (BTB-CUL3-RBX1) E3 ubiquitin-protein ligase complexes that contain CUL3 and SPOP, plus a target protein.

It is found in the nucleus. Its subcellular location is the nucleus speckle. It functions in the pathway protein modification; protein ubiquitination. In terms of biological role, component of a cullin-RING-based BCR (BTB-CUL3-RBX1) E3 ubiquitin-protein ligase complex that mediates the ubiquitination of target proteins, leading most often to their proteasomal degradation. In Xenopus laevis (African clawed frog), this protein is Speckle-type POZ protein A (spop-a).